Consider the following 248-residue polypeptide: Proteasome subunit alpha (248 aa).

Position 2 is an N-acetylserine; partial (Ser-2).

This sequence belongs to the peptidase T1A family. The 20S proteasome core is composed of 14 alpha and 14 beta subunits that assemble into four stacked heptameric rings, resulting in a barrel-shaped structure. The two inner rings, each composed of seven catalytic beta subunits, are sandwiched by two outer rings, each composed of seven alpha subunits. The catalytic chamber with the active sites is on the inside of the barrel. Has a gated structure, the ends of the cylinder being occluded by the N-termini of the alpha-subunits. Is capped by the proteasome-associated ATPase, ARC.

The protein resides in the cytoplasm. It functions in the pathway protein degradation; proteasomal Pup-dependent pathway. The formation of the proteasomal ATPase ARC-20S proteasome complex, likely via the docking of the C-termini of ARC into the intersubunit pockets in the alpha-rings, may trigger opening of the gate for substrate entry. Interconversion between the open-gate and close-gate conformations leads to a dynamic regulation of the 20S proteasome proteolysis activity. Component of the proteasome core, a large protease complex with broad specificity involved in protein degradation. The chain is Proteasome subunit alpha from Mycobacterium tuberculosis (strain CDC 1551 / Oshkosh).